The following is a 141-amino-acid chain: Hemoglobin subunit alpha (141 aa).

In terms of domain architecture, Globin spans 1-141 (VLSPADKANI…VSTVLTSKYR (141 aa)). Ser-3 carries the phosphoserine modification. 2 positions are modified to N6-succinyllysine: Lys-7 and Lys-11. Residue Lys-16 is modified to N6-acetyllysine; alternate. N6-succinyllysine; alternate is present on Lys-16. Tyr-24 bears the Phosphotyrosine mark. Ser-35 is subject to Phosphoserine. At Lys-40 the chain carries N6-succinyllysine. Phosphoserine is present on Ser-49. His-58 lines the O2 pocket. His-87 contacts heme b. Ser-102 is modified (phosphoserine). Thr-108 is subject to Phosphothreonine. Ser-124 and Ser-131 each carry phosphoserine. A phosphothreonine mark is found at Thr-134 and Thr-137. Ser-138 bears the Phosphoserine mark.

The protein belongs to the globin family. Heterotetramer of two alpha chains and two beta chains. In terms of tissue distribution, red blood cells.

Involved in oxygen transport from the lung to the various peripheral tissues. Functionally, hemopressin acts as an antagonist peptide of the cannabinoid receptor CNR1. Hemopressin-binding efficiently blocks cannabinoid receptor CNR1 and subsequent signaling. The chain is Hemoglobin subunit alpha (HBA) from Meles meles (Eurasian badger).